The chain runs to 548 residues: Biotin-dependent acetyl-/propionyl-coenzyme A carboxylase beta5 subunit (548 aa).

Residues 1-23 (MTSVTDRSAHSAERSTEHTIDIH) are disordered. The span at 7–21 (RSAHSAERSTEHTID) shows a compositional bias: basic and acidic residues. Positions 25–281 (TAGKLAELHK…NNSTDAPRYQ (257 aa)) constitute a CoA carboxyltransferase N-terminal domain. Residues 295-541 (DEDLELDTLI…ERKIAQLPPK (247 aa)) form the CoA carboxyltransferase C-terminal domain.

The protein belongs to the AccD/PCCB family. The biotin-dependent acyl-CoA carboxylase complex is composed of AccA3, which contains the biotin carboxylase (BC) and biotin carboxyl carrier protein (BCCP) domains, and AccD5, which contains the carboxyl transferase (CT) domain.

The catalysed reaction is N(6)-carboxybiotinyl-L-lysyl-[protein] + acetyl-CoA = N(6)-biotinyl-L-lysyl-[protein] + malonyl-CoA. The enzyme catalyses N(6)-carboxybiotinyl-L-lysyl-[protein] + propanoyl-CoA = methylmalonyl-CoA + N(6)-biotinyl-L-lysyl-[protein]. The protein operates within lipid metabolism; mycolic acid biosynthesis. Component of a biotin-dependent acyl-CoA carboxylase complex. This subunit transfers the CO2 from carboxybiotin to the CoA ester substrate. When associated with the alpha3 subunit AccA3, is involved in the carboxylation of acetyl-CoA and propionyl-CoA. The polypeptide is Biotin-dependent acetyl-/propionyl-coenzyme A carboxylase beta5 subunit (accD5) (Mycobacterium tuberculosis (strain CDC 1551 / Oshkosh)).